The sequence spans 210 residues: Two-component response regulator ORR7 (210 aa).

The interval 53-92 (VVPLHDNASAEDDDDDEEDDDEDDDDDDDEDDEEEAAPPY) is disordered. Residues 61 to 88 (SAEDDDDDEEDDDEDDDDDDDEDDEEEA) are compositionally biased toward acidic residues. The region spanning 92-205 (YVMAVDDSSV…VRPADISRIT (114 aa)) is the Response regulatory domain. Asp142 is modified (4-aspartylphosphate).

Belongs to the ARR family. Type-A subfamily. Two-component system major event consists of a His-to-Asp phosphorelay between a sensor histidine kinase (HK) and a response regulator (RR). In plants, the His-to-Asp phosphorelay involves an additional intermediate named Histidine-containing phosphotransfer protein (HPt). This multistep phosphorelay consists of a His-Asp-His-Asp sequential transfer of a phosphate group between first a His and an Asp of the HK protein, followed by the transfer to a conserved His of the HPt protein and finally the transfer to an Asp in the receiver domain of the RR protein.

Functions as a response regulator involved in His-to-Asp phosphorelay signal transduction system. Phosphorylation of the Asp residue in the receiver domain activates the ability of the protein to promote the transcription of target genes. Type-A response regulators seem to act as negative regulators of the cytokinin signaling. The protein is Two-component response regulator ORR7 of Oryza sativa subsp. japonica (Rice).